The primary structure comprises 92 residues: uncharacterized protein (92 aa).

Residues 1-92 (MSDAAAPAQA…PSPSQQQVAA (92 aa)) form a disordered region.

This is an uncharacterized protein from Caenorhabditis elegans.